The sequence spans 820 residues: Phenylalanine--tRNA ligase beta subunit (820 aa).

A tRNA-binding domain is found at 42-154; sequence KGGLEGLVIG…EDAVPGTLAK (113 aa). The B5 domain maps to 413–489; it reads AQDFIVELTY…RIYGYNNVEI (77 aa). The Mg(2+) site is built by Asp-467, Asp-473, Glu-476, and Asp-477. Residues 727–820 enclose the FDX-ACB domain; that stretch reads SKFPAVKRDL…LEDKLGAKLR (94 aa).

It belongs to the phenylalanyl-tRNA synthetase beta subunit family. Type 1 subfamily. In terms of assembly, tetramer of two alpha and two beta subunits. It depends on Mg(2+) as a cofactor.

The protein resides in the cytoplasm. It carries out the reaction tRNA(Phe) + L-phenylalanine + ATP = L-phenylalanyl-tRNA(Phe) + AMP + diphosphate + H(+). In Bacteroides fragilis (strain ATCC 25285 / DSM 2151 / CCUG 4856 / JCM 11019 / LMG 10263 / NCTC 9343 / Onslow / VPI 2553 / EN-2), this protein is Phenylalanine--tRNA ligase beta subunit.